Reading from the N-terminus, the 427-residue chain is Glutamate-1-semialdehyde 2,1-aminomutase (427 aa).

K265 is modified (N6-(pyridoxal phosphate)lysine).

It belongs to the class-III pyridoxal-phosphate-dependent aminotransferase family. HemL subfamily. Homodimer. Pyridoxal 5'-phosphate serves as cofactor.

It localises to the cytoplasm. The enzyme catalyses (S)-4-amino-5-oxopentanoate = 5-aminolevulinate. Its pathway is porphyrin-containing compound metabolism; protoporphyrin-IX biosynthesis; 5-aminolevulinate from L-glutamyl-tRNA(Glu): step 2/2. The polypeptide is Glutamate-1-semialdehyde 2,1-aminomutase (Nitratiruptor sp. (strain SB155-2)).